We begin with the raw amino-acid sequence, 379 residues long: Cytochrome b (379 aa).

4 helical membrane passes run 34–54 (YGSL…FLSM), 78–99 (WLLR…YLHA), 114–134 (WNIG…GYVL), and 179–199 (FFAF…LHIM). Residues His-84 and His-98 each contribute to the heme b site. Heme b-binding residues include His-183 and His-197. His-202 serves as a coordination point for a ubiquinone. The next 4 helical transmembrane spans lie at 227–247 (IKDT…VLFE), 289–309 (LGGV…PLTS), 321–341 (LNKT…WIGG), and 349–369 (IIIG…SPTI).

This sequence belongs to the cytochrome b family. As to quaternary structure, the main subunits of complex b-c1 are: cytochrome b, cytochrome c1 and the Rieske protein. Heme b is required as a cofactor.

It localises to the mitochondrion inner membrane. In terms of biological role, component of the ubiquinol-cytochrome c reductase complex (complex III or cytochrome b-c1 complex) that is part of the mitochondrial respiratory chain. The b-c1 complex mediates electron transfer from ubiquinol to cytochrome c. Contributes to the generation of a proton gradient across the mitochondrial membrane that is then used for ATP synthesis. This chain is Cytochrome b (MT-CYB), found in Lumbricus terrestris (Common earthworm).